A 256-amino-acid chain; its full sequence is Type III pantothenate kinase 1 (256 aa).

6–13 (DIGNSHIF) provides a ligand contact to ATP. Residue 107 to 110 (GADR) participates in substrate binding. The Proton acceptor role is filled by Asp109. Asp130 contacts K(+). Thr133 serves as a coordination point for ATP. Thr185 provides a ligand contact to substrate.

This sequence belongs to the type III pantothenate kinase family. As to quaternary structure, homodimer. NH4(+) serves as cofactor. K(+) is required as a cofactor.

The protein resides in the cytoplasm. The catalysed reaction is (R)-pantothenate + ATP = (R)-4'-phosphopantothenate + ADP + H(+). The protein operates within cofactor biosynthesis; coenzyme A biosynthesis; CoA from (R)-pantothenate: step 1/5. Catalyzes the phosphorylation of pantothenate (Pan), the first step in CoA biosynthesis. The protein is Type III pantothenate kinase 1 of Francisella tularensis subsp. holarctica (strain LVS).